The chain runs to 314 residues: tRNA dimethylallyltransferase 1 (314 aa).

17-24 contributes to the ATP binding site; the sequence is GPTAAGKT. Position 19-24 (19-24) interacts with substrate; it reads TAAGKT. Positions 42–45 are interaction with substrate tRNA; the sequence is DSRQ.

It belongs to the IPP transferase family. As to quaternary structure, monomer. Requires Mg(2+) as cofactor.

It carries out the reaction adenosine(37) in tRNA + dimethylallyl diphosphate = N(6)-dimethylallyladenosine(37) in tRNA + diphosphate. Its function is as follows. Catalyzes the transfer of a dimethylallyl group onto the adenine at position 37 in tRNAs that read codons beginning with uridine, leading to the formation of N6-(dimethylallyl)adenosine (i(6)A). The sequence is that of tRNA dimethylallyltransferase 1 from Syntrophotalea carbinolica (strain DSM 2380 / NBRC 103641 / GraBd1) (Pelobacter carbinolicus).